Here is a 574-residue protein sequence, read N- to C-terminus: Interleukin-1 receptor-like 2 (574 aa).

Positions 1–21 are cleaved as a signal peptide; that stretch reads MGVTSLLFCGVFFLLLLFVAA. Residues 22 to 338 lie on the Extracellular side of the membrane; sequence DTCEDIFMHN…ILIYPVPDFR (317 aa). 3 consecutive Ig-like C2-type domains span residues 25 to 113, 132 to 215, and 225 to 321; these read EDIF…VNLT, PDVY…IRNY, and YGRR…TCHA. Asparagine 43, asparagine 55, and asparagine 111 each carry an N-linked (GlcNAc...) asparagine glycan. Cysteine 44 and cysteine 97 are oxidised to a cystine. Cysteines 149 and 199 form a disulfide. Asparagine 231, asparagine 237, asparagine 253, asparagine 269, asparagine 290, and asparagine 302 each carry an N-linked (GlcNAc...) asparagine glycan. An intrachain disulfide couples cysteine 252 to cysteine 319. The helical transmembrane segment at 339–359 threads the bilayer; the sequence is AYLLGGLMAFLLLVVSVLFIY. Residues 360-574 are Cytoplasmic-facing; that stretch reads NSFKIDIMLW…CNAATGLITP (215 aa). Positions 384–539 constitute a TIR domain; that stretch reads KLYDAYVLYP…KFWKKVRYHM (156 aa). Glutamate 470 is a catalytic residue.

It belongs to the interleukin-1 receptor family. In terms of assembly, interacts with IL1RAP; the association is enhanced by IL36B indicative for an functional signaling complex and inhibited by IL36RN. Expressed in bone marrow-derived dendritic cells, splenic CD4(+) T-cells, bone marrow-derived macrophages and bone marrow-derived neutrophils.

It localises to the membrane. The catalysed reaction is NAD(+) + H2O = ADP-D-ribose + nicotinamide + H(+). Receptor for interleukin-36 (IL36A, IL36B and IL36G). After binding to interleukin-36 associates with the coreceptor IL1RAP to form the interleukin-36 receptor complex which mediates interleukin-36-dependent activation of NF-kappa-B, MAPK and other pathways. The IL-36 signaling system is thought to be present in epithelial barriers and to take part in local inflammatory response; it is similar to the IL-1 system. Seems to be involved in skin inflammatory response by induction of the IL-23/IL-17/IL-22 pathway. The chain is Interleukin-1 receptor-like 2 (Il1rl2) from Mus musculus (Mouse).